The primary structure comprises 509 residues: tRNA-2-methylthio-N(6)-dimethylallyladenosine synthase (509 aa).

A compositionally biased stretch (polar residues) spans 1–15; the sequence is MNEQQRLASRQANSS. The segment at 1–25 is disordered; it reads MNEQQRLASRQANSSTKKEEKDYSK. The segment covering 16–25 has biased composition (basic and acidic residues); it reads TKKEEKDYSK. An MTTase N-terminal domain is found at 66–184; it reads RKFYIRTYGC…LPYILKDAMF (119 aa). C75, C111, C145, C221, C225, and C228 together coordinate [4Fe-4S] cluster. Positions 207–437 constitute a Radical SAM core domain; the sequence is RRGDIKAWVN…NTLVNEYGVN (231 aa). One can recognise a TRAM domain in the interval 440–503; sequence KRYIGQIVEV…TWSLNGELVK (64 aa).

Belongs to the methylthiotransferase family. MiaB subfamily. In terms of assembly, monomer. [4Fe-4S] cluster is required as a cofactor.

It is found in the cytoplasm. It carries out the reaction N(6)-dimethylallyladenosine(37) in tRNA + (sulfur carrier)-SH + AH2 + 2 S-adenosyl-L-methionine = 2-methylsulfanyl-N(6)-dimethylallyladenosine(37) in tRNA + (sulfur carrier)-H + 5'-deoxyadenosine + L-methionine + A + S-adenosyl-L-homocysteine + 2 H(+). Functionally, catalyzes the methylthiolation of N6-(dimethylallyl)adenosine (i(6)A), leading to the formation of 2-methylthio-N6-(dimethylallyl)adenosine (ms(2)i(6)A) at position 37 in tRNAs that read codons beginning with uridine. The protein is tRNA-2-methylthio-N(6)-dimethylallyladenosine synthase of Bacillus mycoides (strain KBAB4) (Bacillus weihenstephanensis).